The sequence spans 427 residues: Flotillin-1 (427 aa).

Residues serine 19, serine 163, and serine 385 each carry the phosphoserine modification.

This sequence belongs to the band 7/mec-2 family. Flotillin subfamily. In terms of assembly, heterooligomeric complex of flotillin-1 and flotillin-2 and caveolin-1 and caveolin-2. Interacts with ECPAS.

The protein resides in the cell membrane. The protein localises to the endosome. Its subcellular location is the membrane. It localises to the caveola. It is found in the melanosome. The protein resides in the membrane raft. In terms of biological role, may act as a scaffolding protein within caveolar membranes, functionally participating in formation of caveolae or caveolae-like vesicles. This is Flotillin-1 (FLOT1) from Bos taurus (Bovine).